Here is a 384-residue protein sequence, read N- to C-terminus: MRSLSILGSTGSIGLSTLDVVRQHPEQFTITGLAEGHDVGMLVKQIREFNPRLVSVRNADAAAELASLLGNEKPEIFYGIEGAATVAAADGADMVVSAIVGAAGLVPTISAIKAGKNIALANKETMVVAGRLVTDLARQHKVTIIPVDSEHSAIYQSLLGHRHEDVLRLILTASGGPFLNTSAEELREVTLEQALKHPKWTMGAKITIDSATLMNKGLEVIEAHWLFDMPAHKIGVVVHPQSIIHSMVEYIDGCVMAQLGMPDMRAPIAYAIAYPERCPSGIERLDLPKIGSLSFQEPDPGRFPCLRLAYESLEAGRTCPAVLNAANEIAVAAFLDKRIGFTDIADTVDKTMQAHEAYTPVSLEEYLEADRWAREMAKGLVERA.

6 residues coordinate NADPH: threonine 10, glycine 11, serine 12, isoleucine 13, glycine 36, and asparagine 122. Residue lysine 123 participates in 1-deoxy-D-xylulose 5-phosphate binding. Position 124 (glutamate 124) interacts with NADPH. Residue aspartate 148 participates in Mn(2+) binding. 1-deoxy-D-xylulose 5-phosphate-binding residues include serine 149, glutamate 150, serine 174, and histidine 197. Glutamate 150 contributes to the Mn(2+) binding site. Glycine 203 is a binding site for NADPH. 4 residues coordinate 1-deoxy-D-xylulose 5-phosphate: serine 210, asparagine 215, lysine 216, and glutamate 219. Position 219 (glutamate 219) interacts with Mn(2+).

Belongs to the DXR family. It depends on Mg(2+) as a cofactor. Mn(2+) is required as a cofactor.

The catalysed reaction is 2-C-methyl-D-erythritol 4-phosphate + NADP(+) = 1-deoxy-D-xylulose 5-phosphate + NADPH + H(+). Its pathway is isoprenoid biosynthesis; isopentenyl diphosphate biosynthesis via DXP pathway; isopentenyl diphosphate from 1-deoxy-D-xylulose 5-phosphate: step 1/6. Its function is as follows. Catalyzes the NADPH-dependent rearrangement and reduction of 1-deoxy-D-xylulose-5-phosphate (DXP) to 2-C-methyl-D-erythritol 4-phosphate (MEP). The polypeptide is 1-deoxy-D-xylulose 5-phosphate reductoisomerase (Chlorobium phaeobacteroides (strain DSM 266 / SMG 266 / 2430)).